A 473-amino-acid polypeptide reads, in one-letter code: Photosystem II CP43 reaction center protein (473 aa).

The propeptide occupies 1–14 (MKTLYSLRRFYPVE). Residue Thr15 is modified to N-acetylthreonine. Thr15 carries the phosphothreonine modification. The next 5 membrane-spanning stretches (helical) occupy residues 69 to 93 (LFEV…PHLA), 134 to 155 (LLGP…KDRN), 178 to 200 (KALY…RRIT), 255 to 275 (KPFA…LSYS), and 291 to 312 (WFNN…ASQA). Residue Glu367 coordinates [CaMn4O5] cluster. The chain crosses the membrane as a helical span at residues 447–471 (RARAAAAGFEKGIDRDFEPVLSMTP).

This sequence belongs to the PsbB/PsbC family. PsbC subfamily. In terms of assembly, PSII is composed of 1 copy each of membrane proteins PsbA, PsbB, PsbC, PsbD, PsbE, PsbF, PsbH, PsbI, PsbJ, PsbK, PsbL, PsbM, PsbT, PsbX, PsbY, PsbZ, Psb30/Ycf12, at least 3 peripheral proteins of the oxygen-evolving complex and a large number of cofactors. It forms dimeric complexes. Requires Binds multiple chlorophylls and provides some of the ligands for the Ca-4Mn-5O cluster of the oxygen-evolving complex. It may also provide a ligand for a Cl- that is required for oxygen evolution. PSII binds additional chlorophylls, carotenoids and specific lipids. as cofactor.

The protein resides in the plastid. It is found in the chloroplast thylakoid membrane. Functionally, one of the components of the core complex of photosystem II (PSII). It binds chlorophyll and helps catalyze the primary light-induced photochemical processes of PSII. PSII is a light-driven water:plastoquinone oxidoreductase, using light energy to abstract electrons from H(2)O, generating O(2) and a proton gradient subsequently used for ATP formation. The protein is Photosystem II CP43 reaction center protein of Illicium oligandrum (Star anise).